Reading from the N-terminus, the 672-residue chain is Flap endonuclease 1 (672 aa).

The tract at residues 1–106 (MGIKGLIGFL…QTLAKRKLLR (106 aa)) is N-domain. Asp34 is a Mg(2+) binding site. DNA is bound by residues Arg47 and Arg72. Mg(2+) is bound by residues Asp88, Glu160, Glu162, Asp181, and Asp183. The segment at 124-252 (AIRKYVGRTV…KTAYNLIKKH (129 aa)) is I-domain. Glu160 is a binding site for DNA. DNA contacts are provided by Gly230 and Asp232. Asp232 provides a ligand contact to Mg(2+). The interval 327 to 335 (TQLSLKSFF) is interaction with PCNA. The tract at residues 361–436 (VESAVDSTSD…DAKKRNKRVP (76 aa)) is disordered. A compositionally biased stretch (basic and acidic residues) spans 370 to 382 (DDGKDEVPSDDKV).

Belongs to the XPG/RAD2 endonuclease family. FEN1 subfamily. As to quaternary structure, interacts with PCNA. Three molecules of FEN1 bind to one PCNA trimer with each molecule binding to one PCNA monomer. PCNA stimulates the nuclease activity without altering cleavage specificity. The cofactor is Mg(2+). Phosphorylated. Phosphorylation upon DNA damage induces relocalization to the nuclear plasma.

The protein localises to the nucleus. The protein resides in the nucleolus. Its subcellular location is the nucleoplasm. It is found in the mitochondrion. Its function is as follows. Structure-specific nuclease with 5'-flap endonuclease and 5'-3' exonuclease activities involved in DNA replication and repair. During DNA replication, cleaves the 5'-overhanging flap structure that is generated by displacement synthesis when DNA polymerase encounters the 5'-end of a downstream Okazaki fragment. It enters the flap from the 5'-end and then tracks to cleave the flap base, leaving a nick for ligation. Also involved in the long patch base excision repair (LP-BER) pathway, by cleaving within the apurinic/apyrimidinic (AP) site-terminated flap. Acts as a genome stabilization factor that prevents flaps from equilibrating into structures that lead to duplications and deletions. Also possesses 5'-3' exonuclease activity on nicked or gapped double-stranded DNA, and exhibits RNase H activity. Also involved in replication and repair of rDNA and in repairing mitochondrial DNA. In Babesia bovis, this protein is Flap endonuclease 1.